A 213-amino-acid polypeptide reads, in one-letter code: Ras-related protein Rab-25 (213 aa).

The GTP site is built by Ser-21, Gly-24, Lys-25, Thr-26, Asn-27, Ser-38, His-39, Thr-43, and Thr-44. A Mg(2+)-binding site is contributed by Thr-26. 2 short sequence motifs (switch) span residues Asn-35–Phe-49 and Asp-67–Gly-84. Mg(2+)-binding residues include Thr-44 and Asp-67. Positions 70, 125, 126, 128, 156, and 157 each coordinate GTP. S-geranylgeranyl cysteine attachment occurs at residues Cys-209 and Cys-210. A Cysteine methyl ester modification is found at Cys-210. Positions Ile-211–Leu-213 are cleaved as a propeptide — removed in mature form.

It belongs to the small GTPase superfamily. Rab family. As to quaternary structure, interacts (GTP-bound form) with RAB11FIP1, RAB11FIP2, RAB11FIP3 and RAB11FIP4. Interacts (via the hypervariable C-terminal region) with ITGB1 (via the cytoplasmic region); the interaction is GTP-dependent. Interacts with ITGAV. Associates with the integrin alpha-V/beta-1 heterodimer. Interacts with VPS33B. Mg(2+) serves as cofactor.

The protein localises to the cell membrane. Its subcellular location is the cell projection. It localises to the pseudopodium membrane. The protein resides in the cytoplasmic vesicle. The enzyme catalyses GTP + H2O = GDP + phosphate + H(+). Its activity is regulated as follows. Regulated by guanine nucleotide exchange factors (GEFs) which promote the exchange of bound GDP for free GTP. Regulated by GTPase activating proteins (GAPs) which increase the GTP hydrolysis activity. Inhibited by GDP dissociation inhibitors (GDIs) which prevent Rab-GDP dissociation. In terms of biological role, the small GTPases Rab are key regulators of intracellular membrane trafficking, from the formation of transport vesicles to their fusion with membranes. Rabs cycle between an inactive GDP-bound form and an active GTP-bound form that is able to recruit to membranes different set of downstream effectors directly responsible for vesicle formation, movement, tethering and fusion. RAB25 regulates epithelial cell differentiation, proliferation and survival, thereby playing key roles in tumorigenesis. Promotes invasive migration of cells in which it functions to localize and maintain integrin alpha-V/beta-1 at the tips of extending pseudopodia. Involved in the regulation of epithelial morphogenesis through the control of CLDN4 expression and localization at tight junctions. May selectively regulate the apical recycling pathway. Together with MYO5B regulates transcytosis. In Bos taurus (Bovine), this protein is Ras-related protein Rab-25 (RAB25).